The following is a 326-amino-acid chain: ELMO domain-containing protein 1 (326 aa).

One can recognise an ELMO domain in the interval 133-306 (QHEEMLLKLW…KFRKRIIKQL (174 aa)).

Functionally, acts as a GTPase-activating protein (GAP) toward guanine nucleotide exchange factors like ARL2, ARL3, ARF1 and ARF6, but not for GTPases outside the Arf family. In Bos taurus (Bovine), this protein is ELMO domain-containing protein 1 (ELMOD1).